The primary structure comprises 437 residues: UDP-N-acetylmuramoylalanine--D-glutamate ligase (437 aa).

Position 115–121 (115–121 (GSNGKST)) interacts with ATP.

This sequence belongs to the MurCDEF family.

Its subcellular location is the cytoplasm. It carries out the reaction UDP-N-acetyl-alpha-D-muramoyl-L-alanine + D-glutamate + ATP = UDP-N-acetyl-alpha-D-muramoyl-L-alanyl-D-glutamate + ADP + phosphate + H(+). It participates in cell wall biogenesis; peptidoglycan biosynthesis. Cell wall formation. Catalyzes the addition of glutamate to the nucleotide precursor UDP-N-acetylmuramoyl-L-alanine (UMA). The protein is UDP-N-acetylmuramoylalanine--D-glutamate ligase of Vibrio campbellii (strain ATCC BAA-1116).